The following is a 72-amino-acid chain: Large ribosomal subunit protein bL31 (72 aa).

The protein belongs to the bacterial ribosomal protein bL31 family. Type A subfamily. In terms of assembly, part of the 50S ribosomal subunit.

Its function is as follows. Binds the 23S rRNA. This Deinococcus deserti (strain DSM 17065 / CIP 109153 / LMG 22923 / VCD115) protein is Large ribosomal subunit protein bL31.